A 381-amino-acid chain; its full sequence is Complement decay-accelerating factor (381 aa).

The N-terminal stretch at 1–34 (MTVARPSVPAALPLLGELPRLLLLVLLCLPAVWG) is a signal peptide. Sushi domains lie at 35–96 (DCGL…FCNR), 96–160 (RSCE…FCKK), 161–222 (KSCP…ECRE), and 223–285 (IYCP…ECRG). Disulfide bonds link Cys36–Cys81 and Cys65–Cys94. N-linked (GlcNAc...) asparagine glycosylation is present at Asn95. Disulfide bonds link Cys98-Cys145, Cys129-Cys158, Cys163-Cys204, Cys190-Cys220, Cys225-Cys267, and Cys253-Cys283. Residues 277–354 (SGPPPECRGK…PNKGSGTTSG (78 aa)) are disordered. Positions 287–309 (SLTSKVPPTVQKPTTVNVPTTEV) are enriched in polar residues. Positions 310–328 (SPTSQKTTTKTTTPNAQAT) are enriched in low complexity. Ser353 is lipidated: GPI-anchor amidated serine. The propeptide at 354 to 381 (GTTRLLSGHTCFTLTGLLGTLVTMGLLT) is removed in mature form.

Belongs to the receptors of complement activation (RCA) family. As to quaternary structure, monomer (major form) and non-disulfide-linked, covalent homodimer (minor form). Interacts with ADGRE5. In terms of assembly, (Microbial infection) Interacts with coxsackievirus A21, coxsackieviruses B1, B3 and B5 capsid proteins. (Microbial infection) Interacts with human enterovirus 70 and D68 capsid proteins. As to quaternary structure, (Microbial infection) Interacts with human echoviruses 6, 7, 11, 12, 20 and 21 capsid proteins. Post-translationally, the Ser/Thr-rich domain is heavily O-glycosylated. In terms of tissue distribution, expressed on the plasma membranes of all cell types that are in intimate contact with plasma complement proteins. It is also found on the surfaces of epithelial cells lining extracellular compartments, and variants of the molecule are present in body fluids and in extracellular matrix.

The protein resides in the cell membrane. It is found in the secreted. In terms of biological role, this protein recognizes C4b and C3b fragments that condense with cell-surface hydroxyl or amino groups when nascent C4b and C3b are locally generated during C4 and c3 activation. Interaction of daf with cell-associated C4b and C3b polypeptides interferes with their ability to catalyze the conversion of C2 and factor B to enzymatically active C2a and Bb and thereby prevents the formation of C4b2a and C3bBb, the amplification convertases of the complement cascade. Inhibits complement activation by destabilizing and preventing the formation of C3 and C5 convertases, which prevents complement damage. (Microbial infection) Acts as a receptor for Coxsackievirus A21, coxsackieviruses B1, B3 and B5. Its function is as follows. (Microbial infection) Acts as a receptor for Human enterovirus 70 and D68. Functionally, (Microbial infection) Acts as a receptor for Human echoviruses 6, 7, 11, 12, 20 and 21. The sequence is that of Complement decay-accelerating factor (CD55) from Homo sapiens (Human).